We begin with the raw amino-acid sequence, 269 residues long: Energy-coupling factor transporter ATP-binding protein EcfA1 (269 aa).

The ABC transporter domain occupies 8–242 (IEFKDVSFQY…EEALISVGLD (235 aa)). 42–49 (GHNGSGKS) provides a ligand contact to ATP.

The protein belongs to the ABC transporter superfamily. Energy-coupling factor EcfA family. In terms of assembly, forms a stable energy-coupling factor (ECF) transporter complex composed of 2 membrane-embedded substrate-binding proteins (S component), 2 ATP-binding proteins (A component) and 2 transmembrane proteins (T component).

It is found in the cell membrane. ATP-binding (A) component of a common energy-coupling factor (ECF) ABC-transporter complex. Unlike classic ABC transporters this ECF transporter provides the energy necessary to transport a number of different substrates. The polypeptide is Energy-coupling factor transporter ATP-binding protein EcfA1 (Staphylococcus epidermidis (strain ATCC 35984 / DSM 28319 / BCRC 17069 / CCUG 31568 / BM 3577 / RP62A)).